Reading from the N-terminus, the 520-residue chain is MANTTESAKDRVVIFDTTLRDGEQCPGATMTLDEKLAVAELLDAMGVDIIEAGFPIASNGDFEAVSEIARRTKRATIAGLARAIPADIARAGEAVRHAKAGRIHTFVSTSAIHLAHQMRKTQDEVIEIILKTVTQARDLVEDVEWSAMDATRTDIDYLCRCVEAAIRSGATTINLPDTVGYATPQEYGAMFRQVRERVPNSDKAIFSVHCHNDLGLAVANSLAGLEGGARQIECTVNGIGERAGNAALEEIVMAIRTRADVMPYDTGIDTTMLTRASKLVSHAANFPVQYNKAIVGRNAFAHESGIHQDGMLKHSETYEIMTPASVGLSKTSLVMGKHSGRAAFKSKLAELGISLSDNQFQDVFERFKDLADRKKHVYDEDIEALVDEKLATAHDRIKLLSLSVIAGTRGPQRATMKIEMDGRTFTEEADGNGPVDAVFNAIHEIVPHDAVLELYQVHAVTEGTDAQAEVSVRLKAGERSVTARGADPDTLVASAKAYLSALNKLSAASVRLHAQHAAVV.

One can recognise a Pyruvate carboxyltransferase domain in the interval 12 to 274; it reads VVIFDTTLRD…DTGIDTTMLT (263 aa). 4 residues coordinate Mn(2+): aspartate 21, histidine 209, histidine 211, and asparagine 245. The tract at residues 398 to 520 is regulatory domain; sequence KLLSLSVIAG…RLHAQHAAVV (123 aa).

Belongs to the alpha-IPM synthase/homocitrate synthase family. LeuA type 1 subfamily. As to quaternary structure, homodimer. Mn(2+) serves as cofactor.

The protein localises to the cytoplasm. It carries out the reaction 3-methyl-2-oxobutanoate + acetyl-CoA + H2O = (2S)-2-isopropylmalate + CoA + H(+). The protein operates within amino-acid biosynthesis; L-leucine biosynthesis; L-leucine from 3-methyl-2-oxobutanoate: step 1/4. In terms of biological role, catalyzes the condensation of the acetyl group of acetyl-CoA with 3-methyl-2-oxobutanoate (2-ketoisovalerate) to form 3-carboxy-3-hydroxy-4-methylpentanoate (2-isopropylmalate). The sequence is that of 2-isopropylmalate synthase from Methylorubrum populi (strain ATCC BAA-705 / NCIMB 13946 / BJ001) (Methylobacterium populi).